The chain runs to 96 residues: UPF0213 protein BCE_0033 (96 aa).

The 76-residue stretch at Asn4–Glu79 folds into the GIY-YIG domain.

Belongs to the UPF0213 family.

This Bacillus cereus (strain ATCC 10987 / NRS 248) protein is UPF0213 protein BCE_0033.